Here is an 862-residue protein sequence, read N- to C-terminus: DNA mismatch repair protein MutS (862 aa).

An ATP-binding site is contributed by 613-620 (GPNMAGKS).

Belongs to the DNA mismatch repair MutS family.

In terms of biological role, this protein is involved in the repair of mismatches in DNA. It is possible that it carries out the mismatch recognition step. This protein has a weak ATPase activity. In Desulfitobacterium hafniense (strain Y51), this protein is DNA mismatch repair protein MutS.